Here is a 501-residue protein sequence, read N- to C-terminus: Cryptochrome-1 (501 aa).

In terms of domain architecture, Photolyase/cryptochrome alpha/beta spans 5–134; sequence KKTIVWFRRD…SVQSYNGDLC (130 aa). FAD is bound by residues Tyr-231 and 243–247; that span reads TSLLS. ATP is bound at residue Arg-356. Residues Asp-386 and Asp-388 each contribute to the FAD site. Residue Asp-405 participates in ATP binding.

This sequence belongs to the DNA photolyase class-1 family. As to quaternary structure, homodimer. FAD is required as a cofactor. Requires (6R)-5,10-methylene-5,6,7,8-tetrahydrofolate as cofactor.

Mediates blue light-induced gene expression in addition to its role in blue light-dependent inhibition of stem growth. The protein is Cryptochrome-1 (PHR1) of Sinapis alba (White mustard).